The following is a 370-amino-acid chain: tRNA N6-adenosine threonylcarbamoyltransferase (370 aa).

Residues H122 and H126 each coordinate Fe cation. Residues L153–G157, D186, G199, and N298 contribute to the substrate site. D326 contributes to the Fe cation binding site.

Belongs to the KAE1 / TsaD family. Fe(2+) is required as a cofactor.

The protein localises to the cytoplasm. It carries out the reaction L-threonylcarbamoyladenylate + adenosine(37) in tRNA = N(6)-L-threonylcarbamoyladenosine(37) in tRNA + AMP + H(+). Required for the formation of a threonylcarbamoyl group on adenosine at position 37 (t(6)A37) in tRNAs that read codons beginning with adenine. Is involved in the transfer of the threonylcarbamoyl moiety of threonylcarbamoyl-AMP (TC-AMP) to the N6 group of A37, together with TsaE and TsaB. TsaD likely plays a direct catalytic role in this reaction. The chain is tRNA N6-adenosine threonylcarbamoyltransferase from Granulibacter bethesdensis (strain ATCC BAA-1260 / CGDNIH1).